The chain runs to 347 residues: Peroxidase C2 (347 aa).

Residues 1–24 form the signal peptide; that stretch reads MHSSSSLIKLGFLLLLLNVSLSHA. 4 disulfides stabilise this stretch: Cys-35–Cys-115, Cys-68–Cys-73, Cys-121–Cys-325, and Cys-201–Cys-233. The Proton acceptor role is filled by His-66. Residues Asp-67, Val-70, Gly-72, Asp-74, and Ser-76 each coordinate Ca(2+). N-linked (GlcNAc...) asparagine glycosylation occurs at Asn-81. A substrate-binding site is contributed by Pro-163. His-194 provides a ligand contact to heme b. Thr-195 contacts Ca(2+). Residues Asn-210 and Asn-238 are each glycosylated (N-linked (GlcNAc...) asparagine). Asp-246, Thr-249, and Asp-254 together coordinate Ca(2+).

The protein belongs to the peroxidase family. Classical plant (class III) peroxidase subfamily. Ca(2+) serves as cofactor. Requires heme b as cofactor.

It localises to the secreted. It is found in the vacuole. It catalyses the reaction 2 a phenolic donor + H2O2 = 2 a phenolic radical donor + 2 H2O. Removal of H(2)O(2), oxidation of toxic reductants, biosynthesis and degradation of lignin, suberization, auxin catabolism, response to environmental stresses such as wounding, pathogen attack and oxidative stress. These functions might be dependent on each isozyme/isoform in each plant tissue. This chain is Peroxidase C2 (PRXC2), found in Armoracia rusticana (Horseradish).